The primary structure comprises 360 residues: Fructose import permease protein FrcC (360 aa).

Helical transmembrane passes span 48 to 68 (AAVP…ILGG), 84 to 106 (AIVG…DLSV), 125 to 145 (GFPP…CGYI), 155 to 175 (LPPF…NFLY), 205 to 225 (AVFT…WYVL), 254 to 274 (MLIS…WALI), 284 to 304 (AGQF…ISLF), 310 to 330 (IMGM…LRLM), and 335 to 355 (QWTY…DQWI).

The protein belongs to the binding-protein-dependent transport system permease family. In terms of assembly, the complex is composed of two ATP-binding proteins (FrcA), two transmembrane proteins (FrcC) and a solute-binding protein (FrcB).

It localises to the cell inner membrane. Functionally, part of the high-affinity ABC transporter complex FrcBCA involved in fructose uptake. Is also a high-affinity transporter for ribose and mannose. Responsible for the translocation of the substrate across the membrane. The sequence is that of Fructose import permease protein FrcC from Rhizobium meliloti (Ensifer meliloti).